A 132-amino-acid polypeptide reads, in one-letter code: Small ribosomal subunit protein uS8 (132 aa).

Belongs to the universal ribosomal protein uS8 family. Part of the 30S ribosomal subunit. Contacts proteins S5 and S12.

Functionally, one of the primary rRNA binding proteins, it binds directly to 16S rRNA central domain where it helps coordinate assembly of the platform of the 30S subunit. The sequence is that of Small ribosomal subunit protein uS8 from Nitrobacter hamburgensis (strain DSM 10229 / NCIMB 13809 / X14).